The following is a 64-amino-acid chain: Large ribosomal subunit protein bL35 (64 aa).

A compositionally biased stretch (basic residues) spans 1 to 14 (MKQKTHKGTAKRVK). A disordered region spans residues 1–50 (MKQKTHKGTAKRVKITGSGKLRREQANRRHLLEGKPSKRTRRLKGTEDVA). A compositionally biased stretch (basic and acidic residues) spans 21 to 36 (LRREQANRRHLLEGKP).

It belongs to the bacterial ribosomal protein bL35 family.

The chain is Large ribosomal subunit protein bL35 from Corynebacterium diphtheriae (strain ATCC 700971 / NCTC 13129 / Biotype gravis).